The primary structure comprises 502 residues: Probable malate:quinone oxidoreductase (502 aa).

Belongs to the MQO family. The cofactor is FAD.

The catalysed reaction is (S)-malate + a quinone = a quinol + oxaloacetate. It participates in carbohydrate metabolism; tricarboxylic acid cycle; oxaloacetate from (S)-malate (quinone route): step 1/1. This is Probable malate:quinone oxidoreductase from Parasynechococcus marenigrum (strain WH8102).